An 81-amino-acid chain; its full sequence is Putative membrane protein insertion efficiency factor (81 aa).

Belongs to the UPF0161 family.

It is found in the cell inner membrane. Could be involved in insertion of integral membrane proteins into the membrane. The chain is Putative membrane protein insertion efficiency factor from Thermosipho melanesiensis (strain DSM 12029 / CIP 104789 / BI429).